We begin with the raw amino-acid sequence, 693 residues long: Elongation factor G (693 aa).

Positions Glu8–Leu282 constitute a tr-type G domain. GTP-binding positions include Ala17–Thr24, Asp81–His85, and Asn135–Asp138.

This sequence belongs to the TRAFAC class translation factor GTPase superfamily. Classic translation factor GTPase family. EF-G/EF-2 subfamily.

It is found in the cytoplasm. Catalyzes the GTP-dependent ribosomal translocation step during translation elongation. During this step, the ribosome changes from the pre-translocational (PRE) to the post-translocational (POST) state as the newly formed A-site-bound peptidyl-tRNA and P-site-bound deacylated tRNA move to the P and E sites, respectively. Catalyzes the coordinated movement of the two tRNA molecules, the mRNA and conformational changes in the ribosome. In Streptococcus pneumoniae (strain ATCC 700669 / Spain 23F-1), this protein is Elongation factor G.